Here is a 215-residue protein sequence, read N- to C-terminus: Octanoyltransferase (215 aa).

The 176-residue stretch at 31-206 (PESQDEVWLV…QLVRHLDYAE (176 aa)) folds into the BPL/LPL catalytic domain. Substrate contacts are provided by residues 70–77 (RGGQVTYH), 137–139 (SLG), and 150–152 (GLA). The Acyl-thioester intermediate role is filled by C168.

Belongs to the LipB family.

The protein localises to the cytoplasm. It carries out the reaction octanoyl-[ACP] + L-lysyl-[protein] = N(6)-octanoyl-L-lysyl-[protein] + holo-[ACP] + H(+). It functions in the pathway protein modification; protein lipoylation via endogenous pathway; protein N(6)-(lipoyl)lysine from octanoyl-[acyl-carrier-protein]: step 1/2. Functionally, catalyzes the transfer of endogenously produced octanoic acid from octanoyl-acyl-carrier-protein onto the lipoyl domains of lipoate-dependent enzymes. Lipoyl-ACP can also act as a substrate although octanoyl-ACP is likely to be the physiological substrate. The polypeptide is Octanoyltransferase (Pseudomonas entomophila (strain L48)).